The chain runs to 86 residues: Small ribosomal subunit protein bS16 (86 aa).

The protein belongs to the bacterial ribosomal protein bS16 family.

This chain is Small ribosomal subunit protein bS16, found in Myxococcus xanthus (strain DK1622).